We begin with the raw amino-acid sequence, 611 residues long: MNRKTHIPVENETKSSATRTTNDGRAITYEMQVLQQPQRARACGQGAKSSADRRPVDPPPIVELKIFEGEKRDDITYTMHANYFLFATLEQARPIAHARGQDRNTHPVLTGTPVAGMVYLDRPTPAGYFIFPDLSVRHEGEYRLSFSLYEELKNPKDEDKPEEACDAAGGDAHVTHRLEVKSAPFHVYSAKKFPGLTESTHLSRMVAEQGCRVRIRRDVRMRRREPKSGGKDWDEYEEDTAAARARASATPDPSINGYMQTPHGFIEPNPRPRSASNASHQSLGSISRRPSMQEMGQAYHQQPHYGTAPHTPQNGYTQTAPYGPPPGQQYPPNQFVQQQPPMQPPLPQYQPPNYPAPPPPVTAAQQPQPAQSYYNYPAAPPPPQATQVQQYNVSAHAYDSGVQSHRPSIDFPAQDGYRRNSQQIPPTSQPTAYTQPMQPQYAAQMPPAQHYQQPPPPPPSQASQHSSYSSMDLYNSRPAPIEPHHHGNTPASKASFDLPPINTAAMVSNKLEASSPTSVAPTNAYFSGGQTPIDTHKRSYGDVFSNRHHNAPLRQGQRPSYGQGDSLVTGTTMSAADDDDNASSELDPSTLGMHYRRADGRQIQRALPGHA.

Disordered regions lie at residues 1-57, 222-497, and 511-611; these read MNRK…RPVD, RRRE…ASFD, and LEAS…PGHA. Positions 14–23 are enriched in polar residues; sequence KSSATRTTND. Residues 24 to 216 form the Velvet domain; it reads GRAITYEMQV…AEQGCRVRIR (193 aa). The short motif at 38 to 43 is the Nuclear localization signal element; that stretch reads QRARAC. Positions 242–254 are enriched in low complexity; it reads AARARASATPDPS. A compositionally biased stretch (polar residues) spans 274–290; it reads SASNASHQSLGSISRRP. A compositionally biased stretch (low complexity) spans 330–340; that stretch reads YPPNQFVQQQP. Residues 341-361 show a composition bias toward pro residues; it reads PMQPPLPQYQPPNYPAPPPPV. The span at 362–377 shows a compositional bias: low complexity; that stretch reads TAAQQPQPAQSYYNYP. Residues 419–434 show a composition bias toward polar residues; sequence RNSQQIPPTSQPTAYT. Low complexity-rich tracts occupy residues 435-452 and 461-471; these read QPMQPQYAAQMPPAQHYQ and QASQHSSYSSM. The PEST stretch occupies residues 455–499; it reads PPPPPSQASQHSSYSSMDLYNSRPAPIEPHHHGNTPASKASFDLP. Polar residues predominate over residues 511–533; the sequence is LEASSPTSVAPTNAYFSGGQTPI.

This sequence belongs to the velvet family. VeA subfamily. In terms of assembly, component of the heterotrimeric velvet complex composed of laeA, veA and velB; VeA acting as a bridging protein between laeA and velB.

The protein localises to the nucleus. Its subcellular location is the cytoplasm. Component of the velvet transcription factor complex that controls sexual/asexual developmental ratio in response to light, promoting sexual development in the darkness while stimulating asexual sporulation under illumination. The velvet complex hat acts as a global regulator for secondary metabolite gene expression. Controls the expression of the dothistromin gene cluster. Regulates hyphal growth and pigment formation. Acts as a positive regulator of virulence. This Dothistroma septosporum (strain NZE10 / CBS 128990) (Red band needle blight fungus) protein is Developmental and secondary metabolism regulator veA.